Here is a 131-residue protein sequence, read N- to C-terminus: Holo-[acyl-carrier-protein] synthase (131 aa).

Aspartate 8 and glutamate 59 together coordinate Mg(2+).

The protein belongs to the P-Pant transferase superfamily. AcpS family. Mg(2+) is required as a cofactor.

Its subcellular location is the cytoplasm. The catalysed reaction is apo-[ACP] + CoA = holo-[ACP] + adenosine 3',5'-bisphosphate + H(+). Functionally, transfers the 4'-phosphopantetheine moiety from coenzyme A to a Ser of acyl-carrier-protein. This Rickettsia rickettsii (strain Sheila Smith) protein is Holo-[acyl-carrier-protein] synthase.